Here is an 883-residue protein sequence, read N- to C-terminus: Phosphoenolpyruvate carboxylase (883 aa).

Residues H138 and K546 contribute to the active site.

This sequence belongs to the PEPCase type 1 family. Mg(2+) serves as cofactor.

The enzyme catalyses oxaloacetate + phosphate = phosphoenolpyruvate + hydrogencarbonate. In terms of biological role, forms oxaloacetate, a four-carbon dicarboxylic acid source for the tricarboxylic acid cycle. The sequence is that of Phosphoenolpyruvate carboxylase from Shigella dysenteriae serotype 1 (strain Sd197).